Reading from the N-terminus, the 907-residue chain is MGQSSVAQFASELGLPAELLLEQLRGAGVNKTAYDDVLTEQDKTSLLEYLRKEHGVQEPKNKITLTRKQVTEIKKSDSSGKARTIQVEVRKKRVLVRRDPALEPVVAEESAEIAPAAVIDEPTLQAAPVVLPEPEPVVEAVPEPVAVEQELESEPEPTVAPAEPEAGEVAVAVDEKPTADARPKLTARELLGAEELALREREAKRQAALMAIQAEELRKKQELAQRRQEEAKRAAEAAANKLSEGTLHKPVAKEAPKPEEKNAKKTGKSGGKDWNDSDGKKRGGVKGRSDAGVAGQGWRAKGSKSKSKNNENQQHAFTAPTEPIVHDVLVPETITVGDLAHKMAVKASEVIKTLMKMGMMVTINQVLDQETAIIIVEEMGHNAKAAASNDPEAFLDEAEHAEAVQEPRPPVVTVMGHVDHGKTSLLDYIRRSRVASGEAGGITQHIGAYHVETPRGMVTFLDTPGHEAFTAMRARGAKATDVVILVVAADDGVMPQTIEAVHHAKAANVPIVVAVNKIDKPEANPERVKQELVSHEVVPEDWGGDTMFVEVSAKTGAGIDNLLEAVLLQAEVLELKAPKNIPAKGLVIEGRLDKGRGPVSTILVQSGTLQRGDMILAGTAYGRVRAMLDESGRDVKEAGPSIPVEILGLSDVPSAGEEVIVLNDERKAREIALFRQGKFRDVKLAKQQAAKLESMFEQMGEGEVKVLHLIIKSDVQGSYEALSTSLQKLSTDEVKVNIIHTGVGAISESDVNLAAASKAVLIGFNVRADAGARKLIESTGVDVRYYNIIYEAVDEVKAALGGMLSPEQKENVIGTVEIREVFRISKVGSVAGCYVQDGVVRRNSKVRLIRDNVVIHTGELDSLKRFKDDVKEVKSNFECGLSLKNYNEIEVGDILEVFEVVEVARTL.

Composition is skewed to basic and acidic residues over residues 223–235, 251–263, and 270–281; these read LAQR…KRAA, VAKE…EKNA, and GGKDWNDSDGKK. The disordered stretch occupies residues 223-320; it reads LAQRRQEEAK…ENQQHAFTAP (98 aa). A tr-type G domain is found at 407–576; the sequence is PRPPVVTVMG…LLQAEVLELK (170 aa). The tract at residues 416 to 423 is G1; that stretch reads GHVDHGKT. 416–423 is a binding site for GTP; sequence GHVDHGKT. The G2 stretch occupies residues 441-445; the sequence is GITQH. Residues 462-465 form a G3 region; the sequence is DTPG. GTP contacts are provided by residues 462–466 and 516–519; these read DTPGH and NKID. The G4 stretch occupies residues 516–519; it reads NKID. A G5 region spans residues 552–554; the sequence is SAK.

Belongs to the TRAFAC class translation factor GTPase superfamily. Classic translation factor GTPase family. IF-2 subfamily.

Its subcellular location is the cytoplasm. Functionally, one of the essential components for the initiation of protein synthesis. Protects formylmethionyl-tRNA from spontaneous hydrolysis and promotes its binding to the 30S ribosomal subunits. Also involved in the hydrolysis of GTP during the formation of the 70S ribosomal complex. The sequence is that of Translation initiation factor IF-2 from Methylobacillus flagellatus (strain ATCC 51484 / DSM 6875 / VKM B-1610 / KT).